Reading from the N-terminus, the 446-residue chain is Peroxisomal biogenesis factor 3 (446 aa).

Residues Met1–Lys12 are Peroxisomal-facing. The chain crosses the membrane as a helical span at residues Leu13–Ala33. Topologically, residues Ala34–Val446 are cytoplasmic. A disordered region spans residues Arg101–Ser122.

It belongs to the peroxin-3 family.

The protein resides in the peroxisome membrane. Functionally, involved in peroxisome biosynthesis. This is Peroxisomal biogenesis factor 3 (PEX3) from Eremothecium gossypii (strain ATCC 10895 / CBS 109.51 / FGSC 9923 / NRRL Y-1056) (Yeast).